We begin with the raw amino-acid sequence, 913 residues long: Calcium-activated chloride channel regulator 1 (913 aa).

Positions 1-21 (MESLKSPVFLLILHLLEGVLS) are cleaved as a signal peptide. Positions 46 to 199 (DEALIQHIKD…AITGKNQVRR (154 aa)) are metalloprotease domain. Histidine 156 is a binding site for Zn(2+). The active site involves glutamate 157. Positions 160 and 167 each coordinate Zn(2+). Positions 307–476 (IVCLVLDKSG…NGLVDAFAAL (170 aa)) constitute a VWFA domain. N-linked (GlcNAc...) asparagine glycosylation is found at asparagine 504, asparagine 770, asparagine 804, asparagine 810, asparagine 836, and asparagine 887.

The protein belongs to the CLCR family. The 110 kDa translation product is autoproteolytically cleaved by the metalloprotease domain in the endoplasmic reticulum into a 75 kDa N-terminal and a 35 kDa C-terminal products that remain physically associated with each other. The cleavage is necessary for calcium-activated chloride channel (CaCC) activation activity. Post-translationally, glycosylated. In terms of tissue distribution, exclusively expressed in the digestive and respiratory tracts and in the uterus (at protein level). Expressed in small intestine, colon, stomach, and uterus and slightly expressed in trachea tissue. Exclusively expressed in the mucin granule membranes of gastrointestinal, respiratory, and uterine goblet cells and other mucin-producing cells. In the colon, expressed in the surface mucous cells. In the stomach highly expressed in the surface epithelium in the pylorus. Strongly expressed in the airway epithelium of lung tissues associated with airway hyperresponsiveness (AHR).

The protein resides in the secreted. It is found in the extracellular space. May be involved in mediating calcium-activated chloride conductance. May play critical roles in goblet cell metaplasia, mucus hypersecretion, cystic fibrosis and AHR. May be involved in the regulation of mucus production and/or secretion by goblet cells. Involved in the regulation of tissue inflammation in the innate immune response. May play a role as a tumor suppressor. Induces MUC5AC. This is Calcium-activated chloride channel regulator 1 (Clca1) from Mus musculus (Mouse).